Here is a 415-residue protein sequence, read N- to C-terminus: Probable tRNA pseudouridine synthase D (415 aa).

Aspartate 83 serves as the catalytic Nucleophile. A TRUD domain is found at 158-378 (GFPNYFGYQR…PGRRRELLIR (221 aa)).

This sequence belongs to the pseudouridine synthase TruD family.

The catalysed reaction is uridine(13) in tRNA = pseudouridine(13) in tRNA. In terms of biological role, could be responsible for synthesis of pseudouridine from uracil-13 in transfer RNAs. This Thermococcus gammatolerans (strain DSM 15229 / JCM 11827 / EJ3) protein is Probable tRNA pseudouridine synthase D.